Consider the following 1818-residue polypeptide: U3 small nucleolar RNA-associated protein 10 (1818 aa).

A helical transmembrane segment spans residues 568–588 (TDFYLLIPLILLALFDNSKLI). Residues 1778–1816 (LVPYIAELLEDDDEEVEMEVRRGLVRVIENVLGEPLDRY) form an HEAT repeat.

The protein belongs to the HEATR1/UTP10 family. Component of the ribosomal small subunit (SSU) processome.

The protein resides in the nucleus. It is found in the nucleolus. Its subcellular location is the membrane. Involved in nucleolar processing of pre-18S ribosomal RNA. Involved in ribosome biosynthesis. This is U3 small nucleolar RNA-associated protein 10 from Candida albicans (strain SC5314 / ATCC MYA-2876) (Yeast).